An 83-amino-acid chain; its full sequence is Hainantoxin-III 7 (83 aa).

The first 21 residues, 1 to 21 (MKASMFLALAGLVLLFVVGYA), serve as a signal peptide directing secretion. Residues 22–48 (SESEEKEFPRELLSKVFAVDDFKGEER) constitute a propeptide that is removed on maturation. 3 disulfide bridges follow: C50–C65, C57–C70, and C64–C77. Position 81 is a leucine amide (L81).

This sequence belongs to the neurotoxin 10 (Hwtx-1) family. 15 (Hntx-3) subfamily. As to quaternary structure, monomer. As to expression, expressed by the venom gland.

It localises to the secreted. Its function is as follows. Selective antagonist of neuronal tetrodotoxin (TTX)-sensitive voltage-gated sodium channels (IC(50)=1270 nM on Nav1.1/SCN1A, 270 nM on Nav1.2/SCN2A, 491 nM on Nav1.3/SCN3A and 232 nM on Nav1.7/SCN9A). This toxin suppress Nav1.7 current amplitude without significantly altering the activation, inactivation, and repriming kinetics. Short extreme depolarizations partially activate the toxin-bound channel, indicating voltage-dependent inhibition of this toxin. This toxin increases the deactivation of the Nav1.7 current after extreme depolarizations. The toxin-Nav1.7 complex is gradually dissociated upon prolonged strong depolarizations in a voltage-dependent manner, and the unbound toxin rebinds to Nav1.7 after a long repolarization. Moreover, analysis of chimeric channels showed that the DIIS3-S4 linker is critical for toxin binding to Nav1.7. These data are consistent with this toxin interacting with Nav1.7 site 4 and trapping the domain II voltage sensor in the closed state. This chain is Hainantoxin-III 7, found in Cyriopagopus hainanus (Chinese bird spider).